We begin with the raw amino-acid sequence, 318 residues long: Pantothenate kinase (318 aa).

Residue 96 to 103 (GSVAVGKS) participates in ATP binding.

Belongs to the prokaryotic pantothenate kinase family.

Its subcellular location is the cytoplasm. It catalyses the reaction (R)-pantothenate + ATP = (R)-4'-phosphopantothenate + ADP + H(+). The protein operates within cofactor biosynthesis; coenzyme A biosynthesis; CoA from (R)-pantothenate: step 1/5. The sequence is that of Pantothenate kinase from Rhodopseudomonas palustris (strain BisA53).